A 248-amino-acid polypeptide reads, in one-letter code: Deoxyribose-phosphate aldolase (248 aa).

D117 functions as the Proton donor/acceptor in the catalytic mechanism. K179 acts as the Schiff-base intermediate with acetaldehyde in catalysis. K208 (proton donor/acceptor) is an active-site residue.

Belongs to the DeoC/FbaB aldolase family. DeoC type 1 subfamily.

It localises to the cytoplasm. The catalysed reaction is 2-deoxy-D-ribose 5-phosphate = D-glyceraldehyde 3-phosphate + acetaldehyde. The protein operates within carbohydrate degradation; 2-deoxy-D-ribose 1-phosphate degradation; D-glyceraldehyde 3-phosphate and acetaldehyde from 2-deoxy-alpha-D-ribose 1-phosphate: step 2/2. In terms of biological role, catalyzes a reversible aldol reaction between acetaldehyde and D-glyceraldehyde 3-phosphate to generate 2-deoxy-D-ribose 5-phosphate. This Thermotoga petrophila (strain ATCC BAA-488 / DSM 13995 / JCM 10881 / RKU-1) protein is Deoxyribose-phosphate aldolase.